Reading from the N-terminus, the 147-residue chain is Calmodulin (147 aa).

EF-hand domains follow at residues 8 to 43 (EQIA…LGLS), 44 to 79 (PSEA…QLKC), 81 to 116 (DSEQ…IGEK), and 120 to 147 (AEVD…LLSK). Ca(2+) contacts are provided by Asp-21, Asp-23, Ser-25, Ser-27, Glu-32, Asp-57, Asp-59, Asn-61, Glu-68, Asp-94, Asn-96, Asp-98, and Glu-105.

Belongs to the calmodulin family.

Calmodulin mediates the control of a large number of enzymes, ion channels and other proteins by Ca(2+). Among the enzymes to be stimulated by the calmodulin-Ca(2+) complex are a number of protein kinases and phosphatases. The chain is Calmodulin (CMD1) from Kluyveromyces lactis (strain ATCC 8585 / CBS 2359 / DSM 70799 / NBRC 1267 / NRRL Y-1140 / WM37) (Yeast).